We begin with the raw amino-acid sequence, 182 residues long: ATP-dependent protease subunit HslV (182 aa).

The active site involves threonine 10. The Na(+) site is built by alanine 166, cysteine 169, and serine 172.

Belongs to the peptidase T1B family. HslV subfamily. A double ring-shaped homohexamer of HslV is capped on each side by a ring-shaped HslU homohexamer. The assembly of the HslU/HslV complex is dependent on binding of ATP.

Its subcellular location is the cytoplasm. The enzyme catalyses ATP-dependent cleavage of peptide bonds with broad specificity.. Allosterically activated by HslU binding. Protease subunit of a proteasome-like degradation complex believed to be a general protein degrading machinery. The chain is ATP-dependent protease subunit HslV from Rickettsia africae (strain ESF-5).